A 292-amino-acid chain; its full sequence is Shikimate dehydrogenase (NADP(+)) (292 aa).

Residues serine 22 to serine 24 and serine 69 contribute to the shikimate site. Lysine 73 functions as the Proton acceptor in the catalytic mechanism. Shikimate-binding residues include asparagine 94 and aspartate 111. NADP(+) contacts are provided by residues glycine 135–alanine 139 and isoleucine 236. Tyrosine 238 provides a ligand contact to shikimate. Glycine 260 lines the NADP(+) pocket.

This sequence belongs to the shikimate dehydrogenase family. In terms of assembly, homodimer.

It carries out the reaction shikimate + NADP(+) = 3-dehydroshikimate + NADPH + H(+). It functions in the pathway metabolic intermediate biosynthesis; chorismate biosynthesis; chorismate from D-erythrose 4-phosphate and phosphoenolpyruvate: step 4/7. Its function is as follows. Involved in the biosynthesis of the chorismate, which leads to the biosynthesis of aromatic amino acids. Catalyzes the reversible NADPH linked reduction of 3-dehydroshikimate (DHSA) to yield shikimate (SA). This Streptococcus pyogenes serotype M2 (strain MGAS10270) protein is Shikimate dehydrogenase (NADP(+)).